The chain runs to 264 residues: 3-methyl-2-oxobutanoate hydroxymethyltransferase (264 aa).

The Mg(2+) site is built by Asp-45 and Asp-84. 3-methyl-2-oxobutanoate-binding positions include 45–46 (DS), Asp-84, and Lys-112. Glu-114 serves as a coordination point for Mg(2+). Glu-181 acts as the Proton acceptor in catalysis.

Belongs to the PanB family. In terms of assembly, homodecamer; pentamer of dimers. Requires Mg(2+) as cofactor.

The protein resides in the cytoplasm. The enzyme catalyses 3-methyl-2-oxobutanoate + (6R)-5,10-methylene-5,6,7,8-tetrahydrofolate + H2O = 2-dehydropantoate + (6S)-5,6,7,8-tetrahydrofolate. The protein operates within cofactor biosynthesis; (R)-pantothenate biosynthesis; (R)-pantoate from 3-methyl-2-oxobutanoate: step 1/2. Its function is as follows. Catalyzes the reversible reaction in which hydroxymethyl group from 5,10-methylenetetrahydrofolate is transferred onto alpha-ketoisovalerate to form ketopantoate. The protein is 3-methyl-2-oxobutanoate hydroxymethyltransferase of Vibrio campbellii (strain ATCC BAA-1116).